A 765-amino-acid polypeptide reads, in one-letter code: AMP deaminase 3 (765 aa).

Phosphoserine is present on residues serine 85 and serine 106. Zn(2+) is bound by residues histidine 315 and histidine 317. Substrate is bound by residues histidine 317 and 386–391 (KFNSKY). Histidine 584 contacts Zn(2+). Glutamate 587 is a substrate binding site. Histidine 606 (proton acceptor) is an active-site residue. Aspartate 661 serves as a coordination point for Zn(2+). 662–665 (DPMQ) contributes to the substrate binding site.

This sequence belongs to the metallo-dependent hydrolases superfamily. Adenosine and AMP deaminases family. In terms of assembly, homotetramer. It depends on Zn(2+) as a cofactor. Expressed in adult tissues such as aorta, heart, kidney, lung, muscle and thyroid. Weakly expressed in thyroid and not detected in liver.

The enzyme catalyses AMP + H2O + H(+) = IMP + NH4(+). The protein operates within purine metabolism; IMP biosynthesis via salvage pathway; IMP from AMP: step 1/1. Its function is as follows. AMP deaminase plays a critical role in energy metabolism. The protein is AMP deaminase 3 of Rattus norvegicus (Rat).